Here is a 385-residue protein sequence, read N- to C-terminus: Cytochrome b (385 aa).

4 consecutive transmembrane segments (helical) span residues 32-52 (FGSL…TLAM), 76-98 (WLIR…LHIG), 113-133 (AWIL…LGYV), and 179-199 (FFAL…MHLI). Histidine 82 and histidine 96 together coordinate heme b. Heme b contacts are provided by histidine 183 and histidine 197. An a ubiquinone-binding site is contributed by histidine 202. The next 4 membrane-spanning stretches (helical) occupy residues 226–246 (YLFK…IFVF), 290–310 (LLGV…PKTD), 322–342 (LSKI…QLGA), and 349–369 (FIEF…IIMP).

This sequence belongs to the cytochrome b family. In terms of assembly, fungal cytochrome b-c1 complex contains 10 subunits; 3 respiratory subunits, 2 core proteins and 5 low-molecular weight proteins. Cytochrome b-c1 complex is a homodimer. It depends on heme b as a cofactor.

It is found in the mitochondrion inner membrane. Component of the ubiquinol-cytochrome c reductase complex (complex III or cytochrome b-c1 complex) that is part of the mitochondrial respiratory chain. The b-c1 complex mediates electron transfer from ubiquinol to cytochrome c. Contributes to the generation of a proton gradient across the mitochondrial membrane that is then used for ATP synthesis. The polypeptide is Cytochrome b (cob) (Akanthomyces muscarius (Entomopathogenic fungus)).